Reading from the N-terminus, the 59-residue chain is Cytochrome c oxidase subunit 7 (59 aa).

At 1–24 (MKNTIVQQQRFLQSIHKPTYLQRP) the chain is on the mitochondrial matrix side. A helical transmembrane segment spans residues 25–47 (GSFALVYPYYAVMAGLGLYSLYA). The Mitochondrial intermembrane portion of the chain corresponds to 48–59 (SGRVIFGKKDAF).

It belongs to the cytochrome c oxidase subunit 7 family. In terms of assembly, component of the cytochrome c oxidase (complex IV, CIV), a multisubunit enzyme composed of a catalytic core of 3 subunits and several supernumerary subunits. The complex exists as a monomer or a dimer and forms supercomplexes (SCs) in the inner mitochondrial membrane with ubiquinol-cytochrome c oxidoreductase (cytochrome b-c1 complex, complex III, CIII).

It is found in the mitochondrion inner membrane. It participates in energy metabolism; oxidative phosphorylation. Component of the cytochrome c oxidase, the last enzyme in the mitochondrial electron transport chain which drives oxidative phosphorylation. The respiratory chain contains 3 multisubunit complexes succinate dehydrogenase (complex II, CII), ubiquinol-cytochrome c oxidoreductase (cytochrome b-c1 complex, complex III, CIII) and cytochrome c oxidase (complex IV, CIV), that cooperate to transfer electrons derived from NADH and succinate to molecular oxygen, creating an electrochemical gradient over the inner membrane that drives transmembrane transport and the ATP synthase. Cytochrome c oxidase is the component of the respiratory chain that catalyzes the reduction of oxygen to water. Electrons originating from reduced cytochrome c in the intermembrane space (IMS) are transferred via the dinuclear copper A center (CU(A)) of subunit 2 and heme A of subunit 1 to the active site in subunit 1, a binuclear center (BNC) formed by heme A3 and copper B (CU(B)). The BNC reduces molecular oxygen to 2 water molecules using 4 electrons from cytochrome c in the IMS and 4 protons from the mitochondrial matrix. The protein is Cytochrome c oxidase subunit 7 (cox7) of Schizosaccharomyces pombe (strain 972 / ATCC 24843) (Fission yeast).